An 84-amino-acid chain; its full sequence is Small ribosomal subunit protein uS17 (84 aa).

This sequence belongs to the universal ribosomal protein uS17 family. In terms of assembly, part of the 30S ribosomal subunit.

Its function is as follows. One of the primary rRNA binding proteins, it binds specifically to the 5'-end of 16S ribosomal RNA. The protein is Small ribosomal subunit protein uS17 of Actinobacillus pleuropneumoniae serotype 5b (strain L20).